A 104-amino-acid polypeptide reads, in one-letter code: Evasin P1174 (104 aa).

Positions 1-27 are cleaved as a signal peptide; that stretch reads LKTFCLFLQIAVFIALGIQIFLCGTDA. 3 cysteine pairs are disulfide-bonded: C40–C59, C44–C61, and C55–C72. N-linked (GlcNAc...) asparagine glycans are attached at residues N43, N49, and N58. Positions 85 to 104 are disordered; it reads KPTSEEIADASPRPKETNSH.

The protein localises to the secreted. Functionally, salivary chemokine-binding protein which binds to host chemokines CXCL1 and CXCL8. The chain is Evasin P1174 from Ixodes ricinus (Common tick).